Reading from the N-terminus, the 692-residue chain is Putative ESX-1 scaffolding and assembly protein SaeA (692 aa).

The span at 1 to 21 (MGERGELVSDLHPSDDHDADP) shows a compositional bias: basic and acidic residues. Disordered stretches follow at residues 1–23 (MGER…DPRL) and 87–134 (PAAP…TTGF). Residues 89-107 (APEPDPPPVPEPQPEPEPG) are compositionally biased toward pro residues.

The protein resides in the cytoplasm. In terms of biological role, may be involved in assembly of the ESX-1 / type VII specialized secretion system (T7SS), which exports several proteins including EsxA and EsxB. Involved in DNA conjugation in recipient (MKD8) but not donor (mc(2)155) strain. The polypeptide is Putative ESX-1 scaffolding and assembly protein SaeA (Mycolicibacterium smegmatis (strain ATCC 700084 / mc(2)155) (Mycobacterium smegmatis)).